A 100-amino-acid chain; its full sequence is Small ribosomal subunit protein uS14 (100 aa).

This sequence belongs to the universal ribosomal protein uS14 family. As to quaternary structure, part of the 30S ribosomal subunit. Contacts proteins S3 and S10.

In terms of biological role, binds 16S rRNA, required for the assembly of 30S particles and may also be responsible for determining the conformation of the 16S rRNA at the A site. This chain is Small ribosomal subunit protein uS14, found in Trichormus variabilis (strain ATCC 29413 / PCC 7937) (Anabaena variabilis).